Consider the following 323-residue polypeptide: Arginase-1 (323 aa).

The segment at 1 to 27 is disordered; it reads MSSKPKPIEIIGAPFSKGQPRGGVEKG. The residue at position 17 (Lys17) is an N6-succinyllysine. Phosphoserine is present on residues Ser62 and Ser72. Lys75 carries the N6-succinyllysine modification. Positions 101, 124, 126, and 128 each coordinate Mn(2+). Residues 126–130 and 137–139 each bind substrate; these read HTDIN and SGN. Position 163 is a phosphoserine (Ser163). Asp183 lines the substrate pocket. The residue at position 217 (Ser217) is a Phosphoserine. 2 residues coordinate Mn(2+): Asp232 and Asp234. Positions 246 and 277 each coordinate substrate. Thr281 bears the Phosphothreonine mark.

This sequence belongs to the arginase family. Homotrimer. Interacts with CMTM6. The cofactor is Mn(2+). Detected in liver (at protein level).

It localises to the cytoplasm. The protein localises to the cytoplasmic granule. It carries out the reaction L-arginine + H2O = urea + L-ornithine. Its pathway is nitrogen metabolism; urea cycle; L-ornithine and urea from L-arginine: step 1/1. With respect to regulation, inactivated by diethyl pyrocarbonate (DEPC). In terms of biological role, key element of the urea cycle converting L-arginine to urea and L-ornithine, which is further metabolized into metabolites proline and polyamides that drive collagen synthesis and bioenergetic pathways critical for cell proliferation, respectively; the urea cycle takes place primarily in the liver and, to a lesser extent, in the kidneys. Functions in L-arginine homeostasis in nonhepatic tissues characterized by the competition between nitric oxide synthase (NOS) and arginase for the available intracellular substrate arginine. Arginine metabolism is a critical regulator of innate and adaptive immune responses. Involved in an antimicrobial effector pathway in polymorphonuclear granulocytes (PMN). Upon PMN cell death is liberated from the phagolysosome and depletes arginine in the microenvironment leading to suppressed T cell and natural killer (NK) cell proliferation and cytokine secretion. In group 2 innate lymphoid cells (ILC2s) promotes acute type 2 inflammation in the lung and is involved in optimal ILC2 proliferation but not survival. Plays a role in the immune response of alternatively activated or M2 macrophages in processes such as wound healing and tissue regeneration, immune defense against multicellular pathogens and parasites, and immune suppression and allergic inflammation; the regulatory outcome seems to be organ specific. In tumor-infiltrating dendritic cells (DCs) and myeloid-derived suppressor cells (MDSCs) plays a role in suppression of T cell-mediated antitumor immunity. The polypeptide is Arginase-1 (Arg1) (Rattus norvegicus (Rat)).